A 188-amino-acid polypeptide reads, in one-letter code: UPF0200 protein M164_1169 (188 aa).

15–22 (GMPGSGKS) provides a ligand contact to ATP.

It belongs to the UPF0200 family.

This chain is UPF0200 protein M164_1169, found in Saccharolobus islandicus (strain M.16.4 / Kamchatka #3) (Sulfolobus islandicus).